Consider the following 329-residue polypeptide: GTPase Obg (329 aa).

Residues 1–159 (MQFIDQAIID…WSLQLELKLL (159 aa)) form the Obg domain. An OBG-type G domain is found at 160–328 (AEVGIIGLPN…LLSSIWNELG (169 aa)). Residues 166 to 173 (GLPNAGKS), 191 to 195 (FTTLI), 213 to 216 (DIPG), 280 to 283 (NKKE), and 309 to 311 (SAV) each bind ATP. S173 and T193 together coordinate Mg(2+).

Belongs to the TRAFAC class OBG-HflX-like GTPase superfamily. OBG GTPase family. In terms of assembly, monomer. It depends on Mg(2+) as a cofactor.

The protein localises to the cytoplasm. In terms of biological role, an essential GTPase which binds GTP, GDP and possibly (p)ppGpp with moderate affinity, with high nucleotide exchange rates and a fairly low GTP hydrolysis rate. Plays a role in control of the cell cycle, stress response, ribosome biogenesis and in those bacteria that undergo differentiation, in morphogenesis control. In Prochlorococcus marinus (strain NATL2A), this protein is GTPase Obg.